A 146-amino-acid chain; its full sequence is Hemoglobin subunit beta (146 aa).

The residue at position 1 (Val1) is an N-acetylvaline. Residues 2-146 enclose the Globin domain; sequence HLSGEEKACV…VANALAHKYH (145 aa). Residue Thr12 is modified to Phosphothreonine. Phosphoserine is present on Ser44. Position 59 is an N6-acetyllysine (Lys59). His63 provides a ligand contact to heme b. An N6-acetyllysine modification is found at Lys82. Residue His92 participates in heme b binding. Residue Cys93 is modified to S-nitrosocysteine. Lys144 is subject to N6-acetyllysine.

Belongs to the globin family. Heterotetramer of two alpha chains and two beta chains. As to expression, red blood cells.

In terms of biological role, involved in oxygen transport from the lung to the various peripheral tissues. The polypeptide is Hemoglobin subunit beta (HBB) (Suncus murinus (Asian house shrew)).